The following is a 240-amino-acid chain: Uridylate kinase (240 aa).

Position 12–15 (12–15 (KLSG)) interacts with ATP. The tract at residues 20–25 (GKQGFG) is involved in allosteric activation by GTP. Gly-54 is a binding site for UMP. The ATP site is built by Gly-55 and Arg-59. Residues Asp-74 and 135 to 142 (TGNPYFST) contribute to the UMP site. Asn-163, Tyr-169, and Asp-172 together coordinate ATP.

The protein belongs to the UMP kinase family. In terms of assembly, homohexamer.

It is found in the cytoplasm. It catalyses the reaction UMP + ATP = UDP + ADP. The protein operates within pyrimidine metabolism; CTP biosynthesis via de novo pathway; UDP from UMP (UMPK route): step 1/1. Its activity is regulated as follows. Allosterically activated by GTP. Inhibited by UTP. Its function is as follows. Catalyzes the reversible phosphorylation of UMP to UDP. This is Uridylate kinase from Geobacillus thermodenitrificans (strain NG80-2).